The chain runs to 109 residues: Nucleoid-associated protein Shal_1591 (109 aa).

The segment at N87–F109 is disordered.

The protein belongs to the YbaB/EbfC family. Homodimer.

The protein localises to the cytoplasm. Its subcellular location is the nucleoid. Binds to DNA and alters its conformation. May be involved in regulation of gene expression, nucleoid organization and DNA protection. This Shewanella halifaxensis (strain HAW-EB4) protein is Nucleoid-associated protein Shal_1591.